The chain runs to 444 residues: Probable glycine dehydrogenase (decarboxylating) subunit 1 (444 aa).

Belongs to the GcvP family. N-terminal subunit subfamily. The glycine cleavage system is composed of four proteins: P, T, L and H. In this organism, the P 'protein' is a heterodimer of two subunits.

The catalysed reaction is N(6)-[(R)-lipoyl]-L-lysyl-[glycine-cleavage complex H protein] + glycine + H(+) = N(6)-[(R)-S(8)-aminomethyldihydrolipoyl]-L-lysyl-[glycine-cleavage complex H protein] + CO2. In terms of biological role, the glycine cleavage system catalyzes the degradation of glycine. The P protein binds the alpha-amino group of glycine through its pyridoxal phosphate cofactor; CO(2) is released and the remaining methylamine moiety is then transferred to the lipoamide cofactor of the H protein. This Moorella thermoacetica (strain ATCC 39073 / JCM 9320) protein is Probable glycine dehydrogenase (decarboxylating) subunit 1.